A 793-amino-acid polypeptide reads, in one-letter code: Phenylalanine--tRNA ligase beta subunit (793 aa).

A tRNA-binding domain is found at alanine 39–histidine 148. A B5 domain is found at proline 401–serine 476. Residues aspartate 454, aspartate 460, glutamate 463, and glutamate 464 each contribute to the Mg(2+) site. One can recognise an FDX-ACB domain in the interval serine 699–arginine 792.

Belongs to the phenylalanyl-tRNA synthetase beta subunit family. Type 1 subfamily. In terms of assembly, tetramer of two alpha and two beta subunits. It depends on Mg(2+) as a cofactor.

Its subcellular location is the cytoplasm. The catalysed reaction is tRNA(Phe) + L-phenylalanine + ATP = L-phenylalanyl-tRNA(Phe) + AMP + diphosphate + H(+). The sequence is that of Phenylalanine--tRNA ligase beta subunit from Nitrosococcus oceani (strain ATCC 19707 / BCRC 17464 / JCM 30415 / NCIMB 11848 / C-107).